Consider the following 200-residue polypeptide: 7-methyl-GTP pyrophosphatase (200 aa).

Aspartate 69 serves as the catalytic Proton acceptor.

It belongs to the Maf family. YceF subfamily. Requires a divalent metal cation as cofactor.

Its subcellular location is the cytoplasm. It catalyses the reaction N(7)-methyl-GTP + H2O = N(7)-methyl-GMP + diphosphate + H(+). Nucleoside triphosphate pyrophosphatase that hydrolyzes 7-methyl-GTP (m(7)GTP). May have a dual role in cell division arrest and in preventing the incorporation of modified nucleotides into cellular nucleic acids. The protein is 7-methyl-GTP pyrophosphatase of Colwellia psychrerythraea (strain 34H / ATCC BAA-681) (Vibrio psychroerythus).